Reading from the N-terminus, the 849-residue chain is Probable receptor-like protein kinase At1g30570 (849 aa).

The signal sequence occupies residues 1 to 28 (MSKLRKKYLEHLLCVLIFFTYVIGYGEA). Residues 29-429 (QSKSFLVDCG…GHSVSDSKMR (401 aa)) are Extracellular-facing. Asparagine 40, asparagine 57, asparagine 94, asparagine 122, asparagine 158, asparagine 268, asparagine 271, asparagine 305, and asparagine 343 each carry an N-linked (GlcNAc...) asparagine glycan. Residues 430-450 (IIWISVGAGIAIIIFFVFLGI) traverse the membrane as a helical segment. Residues 451–849 (LVVCLCKKRR…QTGSALHNSA (399 aa)) are Cytoplasmic-facing. Positions 520-793 (FDDGLAIGVG…GEVLWSLEYV (274 aa)) constitute a Protein kinase domain. ATP is bound by residues 526 to 534 (IGVGGFGKV) and lysine 548. Residue aspartate 644 is the Proton acceptor of the active site. The tract at residues 810 to 849 (FSSSQAVEEAPESFTLPACSNQDSSETEQSQTGSALHNSA) is disordered. A compositionally biased stretch (polar residues) spans 827-849 (ACSNQDSSETEQSQTGSALHNSA).

Belongs to the protein kinase superfamily. Ser/Thr protein kinase family.

It localises to the cell membrane. The polypeptide is Probable receptor-like protein kinase At1g30570 (Arabidopsis thaliana (Mouse-ear cress)).